Consider the following 421-residue polypeptide: MSARAGIVVTGTEVLTGRVQDRNGPWIADRLLELGVELAHITICGDRPADIEAQLRFLAAEGVDLIVTSGGLGPTADDLTVATVARFCGRELILDTELEQRIADILRRLMGRRTDVDFDALRAANRKQAMVPDGATVLEPVGTAPGVVVPGSPTVLVLPGPPRELQPMWRTAVQTEALRSAIAGRTEYRQDMVRMFGLPESGLAETLRDAERDLAGFDRLEITTCLRRGELEIVTRYEPDAEPVYRNLLTLLRDRHGSAIFSEDGSLVDDQVAALLAGHTIATAESCTGGMLSARLTDRAGSSAYVAGAAVCYADAAKVELLGVPADLIADHGAVSEPVAEAMADGALRRFGADVAVAITGIAGPGGGTELKPVGTVCFCVRRADGRVVTRTVRLPGDRSDVRERSTTVAMHLLRRALQDG.

This sequence belongs to the CinA family.

In Mycobacterium sp. (strain MCS), this protein is CinA-like protein.